The following is a 221-amino-acid chain: Ribonuclease T (221 aa).

In terms of domain architecture, Exonuclease spans 20–196 (VVVDLETGGF…YDTERTAELF (177 aa)). Aspartate 23, glutamate 25, histidine 183, and aspartate 188 together coordinate Mg(2+). Histidine 183 acts as the Proton donor/acceptor in catalysis.

It belongs to the RNase T family. Homodimer. Mg(2+) is required as a cofactor.

In terms of biological role, trims short 3' overhangs of a variety of RNA species, leaving a one or two nucleotide 3' overhang. Responsible for the end-turnover of tRNA: specifically removes the terminal AMP residue from uncharged tRNA (tRNA-C-C-A). Also appears to be involved in tRNA biosynthesis. The polypeptide is Ribonuclease T (Chromohalobacter salexigens (strain ATCC BAA-138 / DSM 3043 / CIP 106854 / NCIMB 13768 / 1H11)).